Consider the following 78-residue polypeptide: Putative Fe(2+) transport protein A (78 aa).

Belongs to the FeoA family.

In terms of biological role, might be involved in Fe(2+) ion uptake. The sequence is that of Putative Fe(2+) transport protein A from Helicobacter pylori (strain J99 / ATCC 700824) (Campylobacter pylori J99).